Consider the following 360-residue polypeptide: Nucleoporin SEH1 (360 aa).

6 WD repeats span residues 10–49, 55–96, 111–152, 160–210, 217–258, and 276–315; these read DHKD…DWHC, THSG…SNDK, DSRT…NLSQ, SCKL…RKYA, TVTD…KELT, and NHNS…NWKC. K12 participates in a covalent cross-link: Glycyl lysine isopeptide (Lys-Gly) (interchain with G-Cter in SUMO2). 2 positions are modified to phosphoserine: S179 and S190. Residues 324 to 354 are compositionally biased toward polar residues; it reads SPVNGSSQQGTSNPSLGSTIPSLQNSLNGSS. Residues 324–360 form a disordered region; sequence SPVNGSSQQGTSNPSLGSTIPSLQNSLNGSSAGRKHS.

Belongs to the WD repeat SEC13 family. In terms of assembly, component of the Nup107-160 subcomplex of the nuclear pore complex (NPC). The Nup107-160 subcomplex includes NUP160, NUP133, NUP107, NUP98, NUP85, NUP43, NUP37, SEH1 and SEC13. The SEH1 subunit appears to be only weakly associated with the Nup107-160 subcomplex. Component of the GATOR2 subcomplex, composed of MIOS, SEC13, SEH1L, WDR24 and WDR59. The GATOR2 complex interacts with CASTOR1 and CASTOR2; the interaction is negatively regulated by arginine. The GATOR2 complex interacts with SESN1, SESN2 and SESN3; the interaction is negatively regulated by amino acids. SESN1, SESN2 and SESN3 convey leucine availability via direct interaction with SEH1L and WDR24.

Its subcellular location is the chromosome. It localises to the centromere. It is found in the kinetochore. The protein resides in the nucleus. The protein localises to the nuclear pore complex. Its subcellular location is the lysosome membrane. With respect to regulation, the GATOR2 complex is negatively regulated by the upstream amino acid sensors CASTOR1 and SESN2, which sequester the GATOR2 complex in absence of amino acids. In the presence of abundant amino acids, GATOR2 is released from CASTOR1 and SESN2 and activated. In terms of biological role, component of the Nup107-160 subcomplex of the nuclear pore complex (NPC). The Nup107-160 subcomplex is required for the assembly of a functional NPC. The Nup107-160 subcomplex is also required for normal kinetochore microtubule attachment, mitotic progression and chromosome segregation. This subunit plays a role in recruitment of the Nup107-160 subcomplex to the kinetochore. Its function is as follows. As a component of the GATOR2 complex, functions as an activator of the amino acid-sensing branch of the mTORC1 signaling pathway. The GATOR2 complex indirectly activates mTORC1 through the inhibition of the GATOR1 subcomplex. GATOR2 probably acts as an E3 ubiquitin-protein ligase toward GATOR1. In the presence of abundant amino acids, the GATOR2 complex mediates ubiquitination of the NPRL2 core component of the GATOR1 complex, leading to GATOR1 inactivation. In the absence of amino acids, GATOR2 is inhibited, activating the GATOR1 complex. Within the GATOR2 complex, SEC13 and SEH1L are required to stabilize the complex. This Homo sapiens (Human) protein is Nucleoporin SEH1 (SEH1L).